Here is a 975-residue protein sequence, read N- to C-terminus: Macrophage colony-stimulating factor 1 receptor 1 (975 aa).

An N-terminal signal peptide occupies residues 1–17 (MQSFLPLLMGIMASASS). Residues 18-519 (VEWRHPVIWF…VEVSDKLFTS (502 aa)) are Extracellular-facing. Ig-like C2-type domains lie at 34 to 113 (SSEV…VYVK), 125 to 208 (SLRV…INVI), 221 to 310 (MDEY…LLVV), 329 to 407 (GLSV…FHVK), and 404 to 513 (FHVK…VEVS). 3 disulfides stabilise this stretch: C49/C93, C140/C189, and C236/C292. N-linked (GlcNAc...) asparagine glycosylation is found at N156, N165, N246, N250, N289, N301, N399, N420, and N451. C426 and C495 form a disulfide bridge. A helical transmembrane segment spans residues 520 to 540 (TLIGAAGVLAIFLLLLVFLLY). Residues 541–975 (KYKQKPRFEI…LMKTNNYQFC (435 aa)) are Cytoplasmic-facing. The regulatory juxtamembrane domain stretch occupies residues 544 to 576 (QKPRFEIRWKIIEAREGNNYTFIDPTQLPYNEK). Y563 bears the Phosphotyrosine; by autocatalysis mark. The Protein kinase domain maps to 584 to 918 (LKLGKVLGAG…MISQMINRLL (335 aa)). ATP is bound by residues 590-598 (LGAGAFGKV) and K619. Phosphotyrosine; by autocatalysis is present on residues Y702 and Y726. D782 serves as the catalytic Proton acceptor. Residues 800-822 (DFGLARDIMNDSNYVVKGNARLP) are activation loop. Y813 and Y929 each carry phosphotyrosine; by autocatalysis. The tract at residues 939-963 (EGEACDEPKRYDPPCERSCDHEEEE) is disordered. Positions 944–958 (DEPKRYDPPCERSCD) are enriched in basic and acidic residues. At Y972 the chain carries Phosphotyrosine; by autocatalysis.

It belongs to the protein kinase superfamily. Tyr protein kinase family. CSF-1/PDGF receptor subfamily. In terms of assembly, monomer. Homodimer. Interacts with CSF1. Post-translationally, autophosphorylated in response to CSF1 binding. autophosphorylation, leading to its degradation. In terms of processing, ubiquitinated. Becomes rapidly polyubiquitinated after autophosphorylation, leading to its degradation.

Its subcellular location is the cell membrane. The catalysed reaction is L-tyrosyl-[protein] + ATP = O-phospho-L-tyrosyl-[protein] + ADP + H(+). Its activity is regulated as follows. Present in an inactive conformation in the absence of bound ligand. CSF1 binding leads to dimerization and activation by autophosphorylation on tyrosine residues. Functionally, tyrosine-protein kinase that acts as a cell-surface receptor for CSF1 and plays an essential role in the regulation of survival, proliferation and differentiation of hematopoietic precursor cells, especially mononuclear phagocytes, such as macrophages and monocytes. Plays an important role in innate immunity and in inflammatory processes. Plays an important role in the regulation of osteoclast proliferation and differentiation, the regulation of bone resorption, and is required for normal bone development. Promotes reorganization of the actin cytoskeleton, regulates formation of membrane ruffles, cell adhesion and cell migration. Activates several signaling pathways in response to ligand binding. This Takifugu rubripes (Japanese pufferfish) protein is Macrophage colony-stimulating factor 1 receptor 1 (csf1r1).